A 274-amino-acid chain; its full sequence is uncharacterized protein (274 aa).

It belongs to the PhoU family.

This is an uncharacterized protein from Deinococcus radiodurans (strain ATCC 13939 / DSM 20539 / JCM 16871 / CCUG 27074 / LMG 4051 / NBRC 15346 / NCIMB 9279 / VKM B-1422 / R1).